We begin with the raw amino-acid sequence, 317 residues long: Glycine--tRNA ligase alpha subunit (317 aa).

This sequence belongs to the class-II aminoacyl-tRNA synthetase family. As to quaternary structure, tetramer of two alpha and two beta subunits.

The protein resides in the cytoplasm. The enzyme catalyses tRNA(Gly) + glycine + ATP = glycyl-tRNA(Gly) + AMP + diphosphate. This chain is Glycine--tRNA ligase alpha subunit, found in Lactococcus lactis subsp. cremoris (strain SK11).